The sequence spans 267 residues: Tryptophan synthase alpha chain (267 aa).

Residues Glu49 and Asp60 each act as proton acceptor in the active site.

It belongs to the TrpA family. In terms of assembly, tetramer of two alpha and two beta chains.

The catalysed reaction is (1S,2R)-1-C-(indol-3-yl)glycerol 3-phosphate + L-serine = D-glyceraldehyde 3-phosphate + L-tryptophan + H2O. It functions in the pathway amino-acid biosynthesis; L-tryptophan biosynthesis; L-tryptophan from chorismate: step 5/5. Its function is as follows. The alpha subunit is responsible for the aldol cleavage of indoleglycerol phosphate to indole and glyceraldehyde 3-phosphate. In Pelobacter propionicus (strain DSM 2379 / NBRC 103807 / OttBd1), this protein is Tryptophan synthase alpha chain.